The following is a 280-amino-acid chain: Acetyl-coenzyme A carboxylase carboxyl transferase subunit beta (280 aa).

The CoA carboxyltransferase N-terminal domain maps to 28–280; that stretch reads LFLACPYCGA…IVRLHTAEAE (253 aa). 4 residues coordinate Zn(2+): cysteine 32, cysteine 35, cysteine 50, and cysteine 53. The C4-type zinc-finger motif lies at 32 to 53; sequence CPYCGAQMYNKQLGKYRVCAKC.

Belongs to the AccD/PCCB family. Acetyl-CoA carboxylase is a heterohexamer composed of biotin carboxyl carrier protein (AccB), biotin carboxylase (AccC) and two subunits each of ACCase subunit alpha (AccA) and ACCase subunit beta (AccD). It depends on Zn(2+) as a cofactor.

The protein localises to the cytoplasm. The catalysed reaction is N(6)-carboxybiotinyl-L-lysyl-[protein] + acetyl-CoA = N(6)-biotinyl-L-lysyl-[protein] + malonyl-CoA. The protein operates within lipid metabolism; malonyl-CoA biosynthesis; malonyl-CoA from acetyl-CoA: step 1/1. In terms of biological role, component of the acetyl coenzyme A carboxylase (ACC) complex. Biotin carboxylase (BC) catalyzes the carboxylation of biotin on its carrier protein (BCCP) and then the CO(2) group is transferred by the transcarboxylase to acetyl-CoA to form malonyl-CoA. The protein is Acetyl-coenzyme A carboxylase carboxyl transferase subunit beta of Leuconostoc mesenteroides subsp. mesenteroides (strain ATCC 8293 / DSM 20343 / BCRC 11652 / CCM 1803 / JCM 6124 / NCDO 523 / NBRC 100496 / NCIMB 8023 / NCTC 12954 / NRRL B-1118 / 37Y).